Consider the following 362-residue polypeptide: Histidinol-phosphate aminotransferase (362 aa).

At Lys222 the chain carries N6-(pyridoxal phosphate)lysine.

It belongs to the class-II pyridoxal-phosphate-dependent aminotransferase family. Histidinol-phosphate aminotransferase subfamily. In terms of assembly, homodimer. It depends on pyridoxal 5'-phosphate as a cofactor.

The enzyme catalyses L-histidinol phosphate + 2-oxoglutarate = 3-(imidazol-4-yl)-2-oxopropyl phosphate + L-glutamate. The protein operates within amino-acid biosynthesis; L-histidine biosynthesis; L-histidine from 5-phospho-alpha-D-ribose 1-diphosphate: step 7/9. In Shewanella amazonensis (strain ATCC BAA-1098 / SB2B), this protein is Histidinol-phosphate aminotransferase.